Consider the following 202-residue polypeptide: UPF0637 protein Exig_2520 (202 aa).

This sequence belongs to the UPF0637 family.

This is UPF0637 protein Exig_2520 from Exiguobacterium sibiricum (strain DSM 17290 / CCUG 55495 / CIP 109462 / JCM 13490 / 255-15).